The sequence spans 296 residues: CRISPR-associated endonuclease Cas1 2 (296 aa).

Mn(2+) is bound by residues Glu-157, His-224, and Asp-237.

It belongs to the CRISPR-associated endonuclease Cas1 family. In terms of assembly, homodimer, forms a heterotetramer with a Cas2 homodimer. Mg(2+) is required as a cofactor. Requires Mn(2+) as cofactor.

CRISPR (clustered regularly interspaced short palindromic repeat), is an adaptive immune system that provides protection against mobile genetic elements (viruses, transposable elements and conjugative plasmids). CRISPR clusters contain spacers, sequences complementary to antecedent mobile elements, and target invading nucleic acids. CRISPR clusters are transcribed and processed into CRISPR RNA (crRNA). Acts as a dsDNA endonuclease. Involved in the integration of spacer DNA into the CRISPR cassette. The protein is CRISPR-associated endonuclease Cas1 2 of Chlorobaculum tepidum (strain ATCC 49652 / DSM 12025 / NBRC 103806 / TLS) (Chlorobium tepidum).